A 215-amino-acid polypeptide reads, in one-letter code: Adenylate kinase (215 aa).

10–15 (GAGKGT) is a binding site for ATP. The segment at 30–59 (STGDMLRAAIKAGTPLGLEAKKIIDEGGLV) is NMP. AMP-binding positions include Thr-31, Arg-36, 57 to 59 (GLV), 85 to 88 (GFPR), and Gln-92. Residues 122–159 (GRRVHLASGRTYHVTYNPPKTEGKDDVTGEDLIQRDDD) form an LID region. ATP is bound by residues Arg-123 and 132-133 (TY). The AMP site is built by Arg-156 and Arg-167. Position 200 (Gln-200) interacts with ATP.

This sequence belongs to the adenylate kinase family. Monomer.

Its subcellular location is the cytoplasm. The catalysed reaction is AMP + ATP = 2 ADP. It functions in the pathway purine metabolism; AMP biosynthesis via salvage pathway; AMP from ADP: step 1/1. Functionally, catalyzes the reversible transfer of the terminal phosphate group between ATP and AMP. Plays an important role in cellular energy homeostasis and in adenine nucleotide metabolism. This chain is Adenylate kinase, found in Neisseria gonorrhoeae (strain ATCC 700825 / FA 1090).